We begin with the raw amino-acid sequence, 117 residues long: Large ribosomal subunit protein bL20c (117 aa).

The protein belongs to the bacterial ribosomal protein bL20 family.

It localises to the plastid. Its function is as follows. Binds directly to 23S ribosomal RNA and is necessary for the in vitro assembly process of the 50S ribosomal subunit. It is not involved in the protein synthesizing functions of that subunit. The sequence is that of Large ribosomal subunit protein bL20c (rpl20) from Euglena longa (Euglenophycean alga).